The chain runs to 314 residues: tRNA dimethylallyltransferase 2 (314 aa).

Glycine 8–serine 15 serves as a coordination point for ATP. Residue threonine 10–serine 15 coordinates substrate.

This sequence belongs to the IPP transferase family. As to quaternary structure, monomer. Mg(2+) serves as cofactor.

The catalysed reaction is adenosine(37) in tRNA + dimethylallyl diphosphate = N(6)-dimethylallyladenosine(37) in tRNA + diphosphate. Its function is as follows. Catalyzes the transfer of a dimethylallyl group onto the adenine at position 37 in tRNAs that read codons beginning with uridine, leading to the formation of N6-(dimethylallyl)adenosine (i(6)A). This chain is tRNA dimethylallyltransferase 2, found in Mycobacterium ulcerans (strain Agy99).